The primary structure comprises 142 residues: Alpha-lactalbumin (142 aa).

Positions 1–19 are cleaved as a signal peptide; that stretch reads MMSFVSLLLVGILFHATQA. The C-type lysozyme domain maps to 20-142; it reads EQLTKCEVFR…KLDQWLCEKL (123 aa). 4 disulfide bridges follow: C25–C139, C47–C130, C80–C96, and C92–C110. N-linked (GlcNAc...) asparagine glycans are attached at residues N64 and N93. K98, D101, D103, D106, and D107 together coordinate Ca(2+).

This sequence belongs to the glycosyl hydrolase 22 family. In terms of assembly, lactose synthase (LS) is a heterodimer of a catalytic component, beta1,4-galactosyltransferase (beta4Gal-T1) and a regulatory component, alpha-lactalbumin (LA). As to expression, mammary gland specific. Secreted in milk.

It is found in the secreted. In terms of biological role, regulatory subunit of lactose synthase, changes the substrate specificity of galactosyltransferase in the mammary gland making glucose a good acceptor substrate for this enzyme. This enables LS to synthesize lactose, the major carbohydrate component of milk. In other tissues, galactosyltransferase transfers galactose onto the N-acetylglucosamine of the oligosaccharide chains in glycoproteins. In Bos mutus grunniens (Wild yak), this protein is Alpha-lactalbumin (LALBA).